The sequence spans 333 residues: Acetyltransferase Pat (333 aa).

3',5'-cyclic AMP-binding positions include 88 to 91 (GEIA), 98 to 99 (RS), and arginine 138. An N-acetyltransferase domain is found at 156–318 (LMLRPVLPGD…GELSLGREMV (163 aa)). Residue histidine 173 coordinates substrate. Aspartate 214 serves as a coordination point for Mg(2+). Residues 238 to 240 (FTV), 246 to 251 (GRGIGS), asparagine 277, and arginine 286 each bind substrate.

In terms of assembly, homodimer. Mg(2+) serves as cofactor.

With respect to regulation, autoinhibited and allosterically activated by 3,5-cyclic adenosine monophosphate (cAMP). An extensive conformational rearrangement relieves this autoinhibition by means of a substrate-mimicking lid that covers the protein-substrate binding surface. In terms of biological role, catalyzes specifically the acetylation of the epsilon-amino group of a highly conserved lysine residue in acetyl-CoA synthetase (ACS). This acetylation results in the inactivation of ACS activity and could be important for mycobacteria to adjust to environmental changes. The protein is Acetyltransferase Pat of Mycobacterium tuberculosis (strain ATCC 25618 / H37Rv).